A 2548-amino-acid polypeptide reads, in one-letter code: Unconventional myosin-IXa (2548 aa).

The Ras-associating domain maps to 14 to 112 (NEHTLRIYPG…YRFLLREKNL (99 aa)). The 871-residue stretch at 146 to 1016 (KDFDDLCSLP…ERQHLQDLLH (871 aa)) folds into the Myosin motor domain. The helical transmembrane segment at 175–195 (IYTYVGSILIVINPFKFLPIY) threads the bilayer. 239–246 (GESGSGKT) lines the ATP pocket. At serine 755 the chain carries Phosphoserine. Residues 898–920 (LSKLMETLGQAEPYFVKCIRSNA) are actin-binding. IQ domains lie at 1021–1041 (RRII…HFLH), 1042–1071 (LRQA…QKDA), 1074–1103 (MASA…AAIV), 1115–1144 (RHMA…KIIL), and 1138–1167 (QRKK…QRLR). Positions 1021-1162 (RRIILLQRWF…RARQRFKALK (142 aa)) are neck or regulatory domain. Positions 1163-2511 (EQRLRETKPE…LKNVKNSPQK (1349 aa)) are tail. Positions 1223–1236 (SVDCLKESPNKQQE) are enriched in basic and acidic residues. A disordered region spans residues 1223–1250 (SVDCLKESPNKQQERAQSQSGVDLQEDV). A phosphoserine mark is found at serine 1242 and serine 1258. The stretch at 1264-1291 (QKKVGRAKRESRRMRELEQAIFSLELLK) forms a coiled coil. Phosphoserine occurs at positions 1299 and 1317. The interval 1299 to 1386 (SPSEDRRWST…SNETSSAEHL (88 aa)) is disordered. Composition is skewed to low complexity over residues 1324 to 1337 (SESS…LSYE) and 1356 to 1366 (FPSPKISSSPK). The residue at position 1364 (serine 1364) is a Phosphoserine. Polar residues predominate over residues 1372–1381 (NALSASNETS). Residues 1486 to 1532 (VLKKLEKLNTEKEERQKQLQQQNEKEMMEQIRQQTDILEKERKAFKT) are a coiled coil. Positions 1804–1836 (YHPTPPLSPELPGSCRKEFKENKEPSPKAKRKR) are disordered. Over residues 1818-1830 (CRKEFKENKEPSP) the composition is skewed to basic and acidic residues. Residue serine 1948 is modified to Phosphoserine. Phorbol-ester/DAG-type zinc fingers lie at residues 1999 to 2048 (GHIF…TAKC) and 2068 to 2119 (LTSE…DAES). Positions 2063–2251 (VELSRLTSED…LIVVEQMNKY (189 aa)) constitute a Rho-GAP domain. Serine 2294 is subject to Phosphoserine. Positions 2315–2358 (AAMETDITEQQQAAMQQEERVLTEQIENLQKEKEELTFEMLVLE) form a coiled coil. Disordered regions lie at residues 2359 to 2383 (PRAS…ENLN) and 2401 to 2424 (SSLK…KQQD). Serine 2464 is subject to Phosphoserine. The interval 2490–2531 (RGTFNPEKGKQKLKNVKNSPQKTKETPEGTVMSGRRKTVDPD) is disordered.

Belongs to the TRAFAC class myosin-kinesin ATPase superfamily. Myosin family. Phosphorylated by ALPK1 following monosodium urate monohydrate (MSU)-induced inflammation. Found to be expressed in testis and placenta and at lower levels in all the examined tissues with the exception of liver. Isoform 5: Found in leukocytes but not in brain, retina or testis.

It localises to the membrane. It is found in the cytoplasm. Its subcellular location is the synapse. The protein resides in the cell projection. The protein localises to the growth cone. Myosins are actin-based motor molecules with ATPase activity. Unconventional myosins serve in intracellular movements. Regulates Rho by stimulating it's GTPase activity in neurons. Required for the regulation of neurite branching and motor neuron axon guidance. The chain is Unconventional myosin-IXa (MYO9A) from Homo sapiens (Human).